We begin with the raw amino-acid sequence, 175 residues long: uncharacterized protein (175 aa).

The protein resides in the cytoplasm. It is found in the nucleus. This is an uncharacterized protein from Schizosaccharomyces pombe (strain 972 / ATCC 24843) (Fission yeast).